Consider the following 116-residue polypeptide: G antigen 10 (116 aa).

Residues 1–116 (MSWRGRSTYR…PEEGEKQSQC (116 aa)) form a disordered region. Residues 31-44 (FSDEVEPATPEEGE) are compositionally biased toward acidic residues. 2 stretches are compositionally biased toward basic and acidic residues: residues 71 to 80 (PEADSQEQVH) and 102 to 116 (EEVKRPEEGEKQSQC).

It belongs to the GAGE family.

The polypeptide is G antigen 10 (GAGE10) (Homo sapiens (Human)).